An 805-amino-acid chain; its full sequence is Putative cation-transporting ATPase MJ1226 (805 aa).

4 consecutive transmembrane segments (helical) span residues 53–73, 75–95, 226–246, and 258–278; these read SYFWNPIAWMIEIAAILSAII, HWVDFVIILILLLVNGVVGFW, IGDYLIVLAVILIAIMVAVEL, and FALVLAVSAIPAAMPAVLSIT. The active-site 4-aspartylphosphate intermediate is Asp-311. 6 helical membrane passes run 615–637, 641–663, 680–700, 712–734, 747–769, and 773–790; these read YVIYRITETIRILFFVELCILIL, PITALMIVLLAILNDIPILAIAY, ILMLSTALGLSGVVSSFLIFY, ELQSFVFLKLILAGHATIFVTRI, LLFWGVMGTNIIGTIVAAEGIFM, and GWDLALFMWLYAHVWMLI.

This sequence belongs to the cation transport ATPase (P-type) (TC 3.A.3) family. Type IIIA subfamily.

It localises to the cell membrane. It carries out the reaction ATP + H2O = ADP + phosphate + H(+). The protein is Putative cation-transporting ATPase MJ1226 of Methanocaldococcus jannaschii (strain ATCC 43067 / DSM 2661 / JAL-1 / JCM 10045 / NBRC 100440) (Methanococcus jannaschii).